The primary structure comprises 60 residues: Large ribosomal subunit protein uL30 (60 aa).

It belongs to the universal ribosomal protein uL30 family. In terms of assembly, part of the 50S ribosomal subunit.

The chain is Large ribosomal subunit protein uL30 from Pseudoalteromonas translucida (strain TAC 125).